Consider the following 423-residue polypeptide: Kynureninase (423 aa).

Pyridoxal 5'-phosphate is bound by residues L105, S106, 133-136, D218, H221, and Y243; that span reads FPSD. K244 carries the N6-(pyridoxal phosphate)lysine modification. The pyridoxal 5'-phosphate site is built by W273 and N301.

This sequence belongs to the kynureninase family. As to quaternary structure, homodimer. Pyridoxal 5'-phosphate serves as cofactor.

It catalyses the reaction L-kynurenine + H2O = anthranilate + L-alanine + H(+). It carries out the reaction 3-hydroxy-L-kynurenine + H2O = 3-hydroxyanthranilate + L-alanine + H(+). It participates in amino-acid degradation; L-kynurenine degradation; L-alanine and anthranilate from L-kynurenine: step 1/1. It functions in the pathway cofactor biosynthesis; NAD(+) biosynthesis; quinolinate from L-kynurenine: step 2/3. Functionally, catalyzes the cleavage of L-kynurenine (L-Kyn) and L-3-hydroxykynurenine (L-3OHKyn) into anthranilic acid (AA) and 3-hydroxyanthranilic acid (3-OHAA), respectively. The chain is Kynureninase from Xanthomonas oryzae pv. oryzae (strain MAFF 311018).